A 331-amino-acid chain; its full sequence is Ferredoxin--NADP reductase 2 (331 aa).

7 residues coordinate FAD: Glu-37, Gln-45, Tyr-50, Val-90, Phe-124, Asp-286, and Thr-327.

Belongs to the ferredoxin--NADP reductase type 2 family. In terms of assembly, homodimer. Requires FAD as cofactor.

The catalysed reaction is 2 reduced [2Fe-2S]-[ferredoxin] + NADP(+) + H(+) = 2 oxidized [2Fe-2S]-[ferredoxin] + NADPH. The protein is Ferredoxin--NADP reductase 2 of Listeria monocytogenes serovar 1/2a (strain ATCC BAA-679 / EGD-e).